The primary structure comprises 242 residues: Ribose-5-phosphate isomerase A (242 aa).

Residues 39–42 (SGST), 95–98 (DGAD), and 108–111 (KGGG) contribute to the substrate site. The active-site Proton acceptor is the Glu117. Lys135 is a substrate binding site.

The protein belongs to the ribose 5-phosphate isomerase family. In terms of assembly, homodimer.

The catalysed reaction is aldehydo-D-ribose 5-phosphate = D-ribulose 5-phosphate. Its pathway is carbohydrate degradation; pentose phosphate pathway; D-ribose 5-phosphate from D-ribulose 5-phosphate (non-oxidative stage): step 1/1. Its function is as follows. Catalyzes the reversible conversion of ribose-5-phosphate to ribulose 5-phosphate. The polypeptide is Ribose-5-phosphate isomerase A (Chlamydia trachomatis serovar L2 (strain ATCC VR-902B / DSM 19102 / 434/Bu)).